A 213-amino-acid polypeptide reads, in one-letter code: dTTP/UTP pyrophosphatase (213 aa).

Asp92 (proton acceptor) is an active-site residue.

It belongs to the Maf family. YhdE subfamily. A divalent metal cation is required as a cofactor.

Its subcellular location is the cytoplasm. It carries out the reaction dTTP + H2O = dTMP + diphosphate + H(+). The catalysed reaction is UTP + H2O = UMP + diphosphate + H(+). In terms of biological role, nucleoside triphosphate pyrophosphatase that hydrolyzes dTTP and UTP. May have a dual role in cell division arrest and in preventing the incorporation of modified nucleotides into cellular nucleic acids. This Granulibacter bethesdensis (strain ATCC BAA-1260 / CGDNIH1) protein is dTTP/UTP pyrophosphatase.